A 364-amino-acid polypeptide reads, in one-letter code: Peroxidase (364 aa).

Positions 1-20 are cleaved as a signal peptide; it reads MKLSLFSTFAAVIIGALALP. The residue at position 21 (glutamine 21) is a Pyrrolidone carboxylic acid. Cystine bridges form between cysteine 32–cysteine 44, cysteine 43–cysteine 313, cysteine 63–cysteine 149, and cysteine 277–cysteine 342. Histidine 76 (proton acceptor) is an active-site residue. 4 residues coordinate Ca(2+): aspartate 77, glycine 95, aspartate 97, and serine 99. An N-linked (GlcNAc...) (high mannose) asparagine glycan is attached at asparagine 163. Histidine 204 is a heme b binding site. Residues serine 205, aspartate 222, threonine 224, valine 227, and aspartate 229 each coordinate Ca(2+).

The protein belongs to the peroxidase family. Ligninase subfamily. Ca(2+) is required as a cofactor. Requires heme b as cofactor.

Its subcellular location is the secreted. The catalysed reaction is 2 a phenolic donor + H2O2 = 2 a phenolic radical donor + 2 H2O. The chain is Peroxidase from Arthromyces ramosus.